A 457-amino-acid chain; its full sequence is 5' exonuclease Apollo (457 aa).

The TBM signature appears at 425 to 437 (ELPKQYLLTPLNA).

The protein belongs to the DNA repair metallo-beta-lactamase (DRMBL) family. As to quaternary structure, interacts with TERF2; the interaction is direct.

It is found in the chromosome. Its subcellular location is the telomere. It localises to the nucleus. The catalysed reaction is a beta-lactam + H2O = a substituted beta-amino acid. In terms of biological role, 5'-3' exonuclease that plays a central role in telomere maintenance and protection during S-phase. Participates in the protection of telomeres against non-homologous end-joining (NHEJ)-mediated repair, thereby ensuring that telomeres do not fuse. Plays a key role in telomeric loop (T loop) formation by being recruited by TERF2 at the leading end telomeres and by processing leading-end telomeres immediately after their replication via its exonuclease activity: generates 3' single-stranded overhang at the leading end telomeres avoiding blunt leading-end telomeres that are vulnerable to end-joining reactions and expose the telomere end in a manner that activates the DNA repair pathways. May be required for DNA interstrand cross-link repair. Possesses beta-lactamase activity, catalyzing the hydrolysis of penicillin G and nitrocefin. Exhibits no activity towards other beta-lactam antibiotic classes including cephalosporins (cefotaxime) and carbapenems (imipenem). The protein is 5' exonuclease Apollo (DCLRE1B) of Gallus gallus (Chicken).